Here is a 1014-residue protein sequence, read N- to C-terminus: Disease resistance protein RGA4 (1014 aa).

The segment at 1 to 182 (MEAALLSGFI…PRIHEADLVG (182 aa)) is structured coiled coil (CC) domain. The stretch at 105-145 (RTVRATKKLLQTNQHLAQELQRLKRMVEEANQRKQRYTAAA) forms a coiled coil. The region spanning 189–466 (ELLEQLAERQ…WLAEGFVEPV (278 aa)) is the NB-ARC domain. LRR repeat units lie at residues 484-506 (RNII…TYGM), 507-530 (MREF…DKFL), 531-552 (PKYV…NFNG), 580-602 (LRVL…ICNL), 603-624 (VLLK…IAKL), 625-647 (KDLE…VFGL), 701-725 (MNKL…DLRE), 762-784 (PCYL…VTSL), 785-807 (RGLK…ALSN), 808-833 (LSYL…GFPR), and 854-877 (LPFL…KIEC).

It belongs to the disease resistance NB-LRR family. Expressed in leaves.

In terms of biological role, probable disease resistance protein. Resistance proteins guard the plant against pathogens that contain an appropriate avirulence protein via an indirect interaction with this avirulence protein. That triggers a defense system including the hypersensitive response, which restricts the pathogen growth. At the opposite of cultivars Aichi asahi and Sasanishiki, the cultivars Nipponbare, Mokoto and Hitomebore don't recognize the effector avirulence protein AVR-Pia from M.oryzae. This is Disease resistance protein RGA4 from Oryza sativa subsp. japonica (Rice).